The primary structure comprises 165 residues: SsrA-binding protein (165 aa).

A disordered region spans residues 141–165 (EDRRHAIAERETKREMDREISRRRR).

The protein belongs to the SmpB family.

The protein localises to the cytoplasm. Required for rescue of stalled ribosomes mediated by trans-translation. Binds to transfer-messenger RNA (tmRNA), required for stable association of tmRNA with ribosomes. tmRNA and SmpB together mimic tRNA shape, replacing the anticodon stem-loop with SmpB. tmRNA is encoded by the ssrA gene; the 2 termini fold to resemble tRNA(Ala) and it encodes a 'tag peptide', a short internal open reading frame. During trans-translation Ala-aminoacylated tmRNA acts like a tRNA, entering the A-site of stalled ribosomes, displacing the stalled mRNA. The ribosome then switches to translate the ORF on the tmRNA; the nascent peptide is terminated with the 'tag peptide' encoded by the tmRNA and targeted for degradation. The ribosome is freed to recommence translation, which seems to be the essential function of trans-translation. The protein is SsrA-binding protein of Anaeromyxobacter sp. (strain Fw109-5).